We begin with the raw amino-acid sequence, 142 residues long: Putative pre-16S rRNA nuclease (142 aa).

Belongs to the YqgF nuclease family.

Its subcellular location is the cytoplasm. In terms of biological role, could be a nuclease involved in processing of the 5'-end of pre-16S rRNA. This chain is Putative pre-16S rRNA nuclease, found in Ruminiclostridium cellulolyticum (strain ATCC 35319 / DSM 5812 / JCM 6584 / H10) (Clostridium cellulolyticum).